Consider the following 20-residue polypeptide: Hongotoxin-5 (20 aa).

Belongs to the short scorpion toxin superfamily. Potassium channel inhibitor family. Alpha-KTx 02 subfamily. Expressed by the venom gland.

Its subcellular location is the secreted. Its function is as follows. Potent selective inhibitor of Kv1/KCNA voltage-gated potassium channels. The chain is Hongotoxin-5 from Centruroides limbatus (Bark scorpion).